A 362-amino-acid polypeptide reads, in one-letter code: Probable peptidyl-prolyl cis-trans isomerase C27F1.06c (362 aa).

S69 bears the Phosphoserine mark. The disordered stretch occupies residues 144-274 (DEFSSDEEEM…KVKGDGPAAK (131 aa)). 2 stretches are compositionally biased toward acidic residues: residues 146 to 167 (FSSDEEEMDDISVTSSEEEEEE) and 175 to 189 (LNSDEEDAEQAEEEI). Position 177 is a phosphoserine (S177). Over residues 190–218 (LEKPVPKDEVAEKHSKDKLKKEEKEKKTA) the composition is skewed to basic and acidic residues. The PPIase FKBP-type domain maps to 276–362 (KKRVSMRYIG…VFDVKLLAVN (87 aa)).

It belongs to the FKBP-type PPIase family. FKBP3/4 subfamily.

It catalyses the reaction [protein]-peptidylproline (omega=180) = [protein]-peptidylproline (omega=0). Its function is as follows. PPIases accelerate the folding of proteins. It catalyzes the cis-trans isomerization of proline imidic peptide bonds in oligopeptides. The polypeptide is Probable peptidyl-prolyl cis-trans isomerase C27F1.06c (Schizosaccharomyces pombe (strain 972 / ATCC 24843) (Fission yeast)).